A 269-amino-acid polypeptide reads, in one-letter code: Phosphonoacetaldehyde hydrolase (269 aa).

Catalysis depends on D10, which acts as the Nucleophile. The Mg(2+) site is built by D10 and A12. The active-site Schiff-base intermediate with substrate is K52. A Mg(2+)-binding site is contributed by D186.

It belongs to the HAD-like hydrolase superfamily. PhnX family. In terms of assembly, homodimer. Mg(2+) is required as a cofactor.

The catalysed reaction is phosphonoacetaldehyde + H2O = acetaldehyde + phosphate + H(+). In terms of biological role, involved in phosphonate degradation. This chain is Phosphonoacetaldehyde hydrolase, found in Klebsiella pneumoniae subsp. pneumoniae (strain ATCC 700721 / MGH 78578).